The chain runs to 503 residues: Cytochrome P450 3A7 (503 aa).

A heme-binding site is contributed by Cys442.

The protein belongs to the cytochrome P450 family. Requires heme as cofactor. Expressed in fetal liver (at protein level).

The protein resides in the endoplasmic reticulum membrane. Its subcellular location is the microsome membrane. The catalysed reaction is an organic molecule + reduced [NADPH--hemoprotein reductase] + O2 = an alcohol + oxidized [NADPH--hemoprotein reductase] + H2O + H(+). It carries out the reaction 3beta-hydroxyandrost-5-en-17-one + reduced [NADPH--hemoprotein reductase] + O2 = 3beta,16alpha-dihydroxy-androst-5-en-17-one + oxidized [NADPH--hemoprotein reductase] + H2O + H(+). The enzyme catalyses dehydroepiandrosterone 3-sulfate + reduced [NADPH--hemoprotein reductase] + O2 = 16alpha-hydroxydehydroepiandrosterone 3-sulfate + oxidized [NADPH--hemoprotein reductase] + H2O + H(+). It catalyses the reaction testosterone + reduced [NADPH--hemoprotein reductase] + O2 = 6beta,17beta-dihydroxyandrost-4-en-3-one + oxidized [NADPH--hemoprotein reductase] + H2O + H(+). The catalysed reaction is estrone + reduced [NADPH--hemoprotein reductase] + O2 = 2-hydroxyestrone + oxidized [NADPH--hemoprotein reductase] + H2O + H(+). It carries out the reaction estrone + reduced [NADPH--hemoprotein reductase] + O2 = 4-hydroxyestrone + oxidized [NADPH--hemoprotein reductase] + H2O + H(+). The enzyme catalyses estrone + reduced [NADPH--hemoprotein reductase] + O2 = 16alpha-hydroxyestrone + oxidized [NADPH--hemoprotein reductase] + H2O + H(+). It catalyses the reaction 17beta-estradiol + reduced [NADPH--hemoprotein reductase] + O2 = 2-hydroxy-17beta-estradiol + oxidized [NADPH--hemoprotein reductase] + H2O + H(+). The catalysed reaction is 17beta-estradiol + reduced [NADPH--hemoprotein reductase] + O2 = 6beta-hydroxyestradiol-17beta + oxidized [NADPH--hemoprotein reductase] + H2O + H(+). It carries out the reaction all-trans-retinoate + reduced [NADPH--hemoprotein reductase] + O2 = all-trans-4-hydroxyretinoate + oxidized [NADPH--hemoprotein reductase] + H2O + H(+). The enzyme catalyses all-trans-retinoate + reduced [NADPH--hemoprotein reductase] + O2 = all-trans-18-hydroxyretinoate + oxidized [NADPH--hemoprotein reductase] + H2O + H(+). It participates in steroid hormone biosynthesis. Its pathway is cofactor metabolism; retinol metabolism. Functionally, a cytochrome P450 monooxygenase involved in the metabolism of steroid hormones and vitamins during embryogenesis. Mechanistically, uses molecular oxygen inserting one oxygen atom into a substrate, and reducing the second into a water molecule, with two electrons provided by NADPH via cytochrome P450 reductase (NADPH--hemoprotein reductase). Catalyzes the hydroxylation of carbon-hydrogen bonds. Metabolizes 3beta-hydroxyandrost-5-en-17-one (dehydroepiandrosterone, DHEA), a precursor in the biosynthesis of androgen and estrogen steroid hormones. Exhibits high catalytic activity for the formation of hydroxyestrogens from estrone (E1), particularly D-ring hydroxylated estrone at the C16-alpha position. Mainly hydroxylates all trans-retinoic acid (atRA) to 4-hydroxyretinoate and may play a role in atRA clearance during fetal development. Also involved in the oxidative metabolism of xenobiotics including anticonvulsants. This is Cytochrome P450 3A7 from Homo sapiens (Human).